Consider the following 624-residue polypeptide: MAARVLGQMVLAVLMASAVAGVAIAAIARVEWPAYNTSNQLHALTTVGQFGCLAGLFAAGLLWRRGRRTLARLGALAFISAFSVVTLAMPLGATKLYLFGVSVDQQFRTEYLTRLTDTAGLHDMTYIGLPPFYPAGWFWLGGRIAAATGTPAWEMFKPWSIVSITIAVALALVLWAAMIRFEYALVATAASTAAMLAYASTEPYAAIITVLMPPVFVLAWAGLRARTRGGGWAAIVGVGIFLGVAALFYTLLLVYAAFTLTIMALCVAVARRHIDPLLRLAVIAVISGAIALLTWAPYLLAAMRGEPADSGTAQHYLPDAGAELHFPMFSLTLHGALCMLGTVWLVVRARTSTRAGALAVAVVAVYAWSLLSMLTTLAGTTLLSFRLQPTLTVLLTTAGAFGFIEATLAIAHRYRPETSRRVVAAATAVGAIGAVTFSQDIPDVLRPDINVAYTDTDGTGQRADRRPPGAERYYREIDAKILEVTGVPRNQTVVLTADYSFLSFYPYYGFQGLTSHYANPLAQFDKRAAAIEGWATLGSADDFVAALDELPWEPPTVFLMRHGANDTYTLRLASDVYPNQPNVRRYHVELDSAVFDDPRFEVSDHGPFVLAIRKPGGKPETDGH.

13 helical membrane passes run 5 to 25, 43 to 63, 73 to 93, 127 to 147, 159 to 179, 181 to 201, 203 to 223, 234 to 254, 280 to 300, 326 to 346, 355 to 375, 391 to 411, and 422 to 442; these read VLGQ…VAIA, ALTT…GLLW, LGAL…PLGA, IGLP…IAAA, WSIV…AAMI, FEYA…YAST, PYAA…WAGL, AIVG…LLLV, LAVI…PYLL, FPMF…VWLV, AGAL…SMLT, LTVL…LAIA, and VVAA…QDIP.

This sequence belongs to the glycosyltransferase 85 family.

The protein resides in the cell membrane. The enzyme catalyses Adds an alpha-D-arabinofuranosyl group from trans,octacis-decaprenylphospho-beta-D-arabinofuranose at the 5-O-position of the eighth, tenth and twelfth galactofuranose unit of the galactofuranan chain of [beta-D-galactofuranosyl-(1-&gt;5)-beta-D-galactofuranosyl-(1-&gt;6)]14-beta-D-galactofuranosyl-(1-&gt;5)-beta-D-galactofuranosyl-(1-&gt;4)-alpha-L-rhamnopyranosyl-(1-&gt;3)-N-acetyl-alpha-D-glucosaminyl-diphospho-trans,octacis-decaprenol.. It participates in cell wall biogenesis; cell wall polysaccharide biosynthesis. In terms of biological role, involved in the biosynthesis of the arabinogalactan (AG) region of the mycolylarabinogalactan-peptidoglycan (mAGP) complex, an essential component of the mycobacterial cell wall. Catalyzes the addition of the first key arabinofuranosyl (Araf) residue from the sugar donor decaprenyl-phospho-arabinose (DPA) on the C-5 of a 6-linked galactofuranosyl (Galf) of the galactan domain, thus 'priming' the galactan for further elaboration by other arabinofuranosyltransferases. It is not able to add an Araf residue to a terminal Galf. This chain is Galactan 5-O-arabinofuranosyltransferase, found in Mycolicibacterium smegmatis (strain ATCC 700084 / mc(2)155) (Mycobacterium smegmatis).